The sequence spans 148 residues: Large ribosomal subunit protein bL28c (148 aa).

A chloroplast-targeting transit peptide spans 1-71; it reads MAASGMLISN…PLKPSLQPVA (71 aa).

In terms of assembly, component of the chloroplast large ribosomal subunit (LSU). Mature 70S chloroplast ribosomes of higher plants consist of a small (30S) and a large (50S) subunit. The 30S small subunit contains 1 molecule of ribosomal RNA (16S rRNA) and 24 different proteins. The 50S large subunit contains 3 rRNA molecules (23S, 5S and 4.5S rRNA) and 33 different proteins.

Its subcellular location is the plastid. The protein resides in the chloroplast. Functionally, component of the chloroplast ribosome (chloro-ribosome), a dedicated translation machinery responsible for the synthesis of chloroplast genome-encoded proteins, including proteins of the transcription and translation machinery and components of the photosynthetic apparatus. This is Large ribosomal subunit protein bL28c (RPL28) from Spinacia oleracea (Spinach).